The sequence spans 161 residues: Nucleotide-binding protein Pnuc_0290 (161 aa).

This sequence belongs to the YajQ family.

In terms of biological role, nucleotide-binding protein. This chain is Nucleotide-binding protein Pnuc_0290, found in Polynucleobacter asymbioticus (strain DSM 18221 / CIP 109841 / QLW-P1DMWA-1) (Polynucleobacter necessarius subsp. asymbioticus).